Here is a 177-residue protein sequence, read N- to C-terminus: Iron-sulfur cluster assembly protein SufA (177 aa).

Residues 1 to 18 form the signal peptide; that stretch reads MTIHIFLCFLLILKIVNA. Cys-101, Cys-169, and Cys-171 together coordinate [4Fe-4S] cluster.

It belongs to the HesB/IscA family. As to quaternary structure, homodimer. Homotetramer formation is observed in vitro.

It is found in the plastid. Its subcellular location is the apicoplast. It participates in cofactor biosynthesis; iron-sulfur cluster biosynthesis. Its function is as follows. Participates in the sulfur mobilization (SUF) pathway for iron-sulfur (Fe-S) cluster biogenesis. Involved in the pre-assembly of [4Fe-4S] clusters and their transfer to target proteins. This Plasmodium falciparum (isolate 3D7) protein is Iron-sulfur cluster assembly protein SufA.